We begin with the raw amino-acid sequence, 98 residues long: Putative pterin-4-alpha-carbinolamine dehydratase (98 aa).

It belongs to the pterin-4-alpha-carbinolamine dehydratase family.

It catalyses the reaction (4aS,6R)-4a-hydroxy-L-erythro-5,6,7,8-tetrahydrobiopterin = (6R)-L-erythro-6,7-dihydrobiopterin + H2O. This is Putative pterin-4-alpha-carbinolamine dehydratase from Parasynechococcus marenigrum (strain WH8102).